A 242-amino-acid chain; its full sequence is UPF0246 protein SPN23F15130 (242 aa).

Belongs to the UPF0246 family.

The protein is UPF0246 protein SPN23F15130 of Streptococcus pneumoniae (strain ATCC 700669 / Spain 23F-1).